We begin with the raw amino-acid sequence, 408 residues long: LL-diaminopimelate aminotransferase (408 aa).

Residues tyrosine 15 and glycine 42 each contribute to the substrate site. Residues tyrosine 72, 108 to 109, tyrosine 132, asparagine 187, tyrosine 218, and 246 to 248 each bind pyridoxal 5'-phosphate; these read SK and SFS. Substrate contacts are provided by lysine 109, tyrosine 132, and asparagine 187. Lysine 249 bears the N6-(pyridoxal phosphate)lysine mark. 2 residues coordinate pyridoxal 5'-phosphate: arginine 257 and asparagine 292. Asparagine 292 and arginine 388 together coordinate substrate.

This sequence belongs to the class-I pyridoxal-phosphate-dependent aminotransferase family. LL-diaminopimelate aminotransferase subfamily. In terms of assembly, homodimer. Requires pyridoxal 5'-phosphate as cofactor.

It catalyses the reaction (2S,6S)-2,6-diaminopimelate + 2-oxoglutarate = (S)-2,3,4,5-tetrahydrodipicolinate + L-glutamate + H2O + H(+). It participates in amino-acid biosynthesis; L-lysine biosynthesis via DAP pathway; LL-2,6-diaminopimelate from (S)-tetrahydrodipicolinate (aminotransferase route): step 1/1. In terms of biological role, involved in the synthesis of meso-diaminopimelate (m-DAP or DL-DAP), required for both lysine and peptidoglycan biosynthesis. Catalyzes the direct conversion of tetrahydrodipicolinate to LL-diaminopimelate. The chain is LL-diaminopimelate aminotransferase from Prochlorococcus marinus (strain SARG / CCMP1375 / SS120).